The sequence spans 643 residues: Threonine--tRNA ligase (643 aa).

The region spanning 1–61 (MPIITLPDGS…EQDATLEIIT (61 aa)) is the TGS domain. A catalytic region spans residues 243–534 (DHRKIGKALD…ITEEYAGFFP (292 aa)). Zn(2+) contacts are provided by cysteine 334, histidine 385, and histidine 511.

Belongs to the class-II aminoacyl-tRNA synthetase family. As to quaternary structure, homodimer. Zn(2+) is required as a cofactor.

It is found in the cytoplasm. The catalysed reaction is tRNA(Thr) + L-threonine + ATP = L-threonyl-tRNA(Thr) + AMP + diphosphate + H(+). Its function is as follows. Catalyzes the attachment of threonine to tRNA(Thr) in a two-step reaction: L-threonine is first activated by ATP to form Thr-AMP and then transferred to the acceptor end of tRNA(Thr). Also edits incorrectly charged L-seryl-tRNA(Thr). In Haemophilus influenzae (strain 86-028NP), this protein is Threonine--tRNA ligase.